Consider the following 496-residue polypeptide: Probable cytosol aminopeptidase (496 aa).

2 residues coordinate Mn(2+): Lys-262 and Asp-267. Residue Lys-274 is part of the active site. Residues Asp-285, Asp-344, and Glu-346 each contribute to the Mn(2+) site. The active site involves Arg-348.

Belongs to the peptidase M17 family. Mn(2+) is required as a cofactor.

It localises to the cytoplasm. The enzyme catalyses Release of an N-terminal amino acid, Xaa-|-Yaa-, in which Xaa is preferably Leu, but may be other amino acids including Pro although not Arg or Lys, and Yaa may be Pro. Amino acid amides and methyl esters are also readily hydrolyzed, but rates on arylamides are exceedingly low.. It catalyses the reaction Release of an N-terminal amino acid, preferentially leucine, but not glutamic or aspartic acids.. Presumably involved in the processing and regular turnover of intracellular proteins. Catalyzes the removal of unsubstituted N-terminal amino acids from various peptides. This is Probable cytosol aminopeptidase from Rhizobium leguminosarum bv. trifolii (strain WSM2304).